We begin with the raw amino-acid sequence, 249 residues long: Imidazole glycerol phosphate synthase subunit HisF (249 aa).

Residues Asp11 and Asp130 contribute to the active site.

This sequence belongs to the HisA/HisF family. In terms of assembly, heterodimer of HisH and HisF.

It is found in the cytoplasm. It carries out the reaction 5-[(5-phospho-1-deoxy-D-ribulos-1-ylimino)methylamino]-1-(5-phospho-beta-D-ribosyl)imidazole-4-carboxamide + L-glutamine = D-erythro-1-(imidazol-4-yl)glycerol 3-phosphate + 5-amino-1-(5-phospho-beta-D-ribosyl)imidazole-4-carboxamide + L-glutamate + H(+). The protein operates within amino-acid biosynthesis; L-histidine biosynthesis; L-histidine from 5-phospho-alpha-D-ribose 1-diphosphate: step 5/9. Functionally, IGPS catalyzes the conversion of PRFAR and glutamine to IGP, AICAR and glutamate. The HisF subunit catalyzes the cyclization activity that produces IGP and AICAR from PRFAR using the ammonia provided by the HisH subunit. In Exiguobacterium sibiricum (strain DSM 17290 / CCUG 55495 / CIP 109462 / JCM 13490 / 255-15), this protein is Imidazole glycerol phosphate synthase subunit HisF.